A 1488-amino-acid polypeptide reads, in one-letter code: Phenolphthiocerol/phthiocerol polyketide synthase subunit E (1488 aa).

The region spanning 5-438 is the Ketosynthase family 3 (KS3) domain; that stretch reads ENAIAVVGMA…GTNAHVVLEE (434 aa). Catalysis depends on for beta-ketoacyl synthase activity residues C184, H320, and H361. Positions 551 to 868 are acyltransferase; that stretch reads VFLFPGQGAQ…GELWSAGVEV (318 aa). S641 functions as the For malonyltransferase activity in the catalytic mechanism. The 75-residue stretch at 930–1004 folds into the Carrier domain; sequence NGESQTEVTL…SLTAAVDASF (75 aa). S965 carries the post-translational modification O-(pantetheine 4'-phosphoryl)serine. An NADP(+)-binding site is contributed by 1286–1331; it reads EGVVAVELEGEGRSVLRPDVDLRRTVGWFTTYYPVPLACATGLGAL.

NADP(+) is required as a cofactor. Pantetheine 4'-phosphate serves as cofactor.

It carries out the reaction icosanoyl-[(phenol)carboxyphthiodiolenone synthase] + 2 (S)-methylmalonyl-CoA + 3 malonyl-CoA + 5 NADPH + 10 H(+) = C32-carboxyphthiodiolenone-[(phenol)carboxyphthiodiolenone synthase] + 5 CO2 + 5 NADP(+) + 5 CoA + 2 H2O. It catalyses the reaction docosanoyl-[(phenol)carboxyphthiodiolenone synthase] + 2 (S)-methylmalonyl-CoA + 3 malonyl-CoA + 5 NADPH + 10 H(+) = C34-carboxyphthiodiolenone-[(phenol)carboxyphthiodiolenone synthase] + 5 CO2 + 5 NADP(+) + 5 CoA + 2 H2O. The enzyme catalyses 17-(4-hydroxyphenyl)heptadecanoyl-[(phenol)carboxyphthiodiolenone synthase] + 2 (S)-methylmalonyl-CoA + 3 malonyl-CoA + 5 NADPH + 10 H(+) = C35-(phenol)carboxyphthiodiolenone-[(phenol)carboxyphthiodiolenone synthase] + 5 CO2 + 5 NADP(+) + 5 CoA + 2 H2O. The catalysed reaction is 19-(4-hydroxyphenyl)nonadecanoyl-[(phenol)carboxyphthiodiolenone synthase] + 2 (S)-methylmalonyl-CoA + 3 malonyl-CoA + 5 NADPH + 10 H(+) = C37-(phenol)carboxyphthiodiolenone-[(phenol)carboxyphthiodiolenone synthase] + 5 CO2 + 5 NADP(+) + 5 CoA + 2 H2O. It functions in the pathway lipid metabolism; fatty acid biosynthesis. Functionally, part of the PpsABCDE complex involved in the biosynthesis of the lipid core common to phthiocerols and phenolphthiocerols by successive additions of malonyl-CoA or methylmalonyl-CoA extender units. PpsA can accept as substrate the activated forms of either icosanoyl (C20), docosanoyl (C22) or lignoceroyl (C24) groups from FadD26, or a (4-hydroxyphenyl)-C17 or (4-hydroxyphenyl)-C19 fatty acyl from FadD29. PpsA initiates the biosynthesis and extends its substrate using a malonyl-CoA extender unit. The PpsB and PpsC proteins add the second and third malonyl-CoA extender units. PpsD adds an (R)-methylmalonyl unit and PpsE adds a second (R)-methylmalonyl unit. The incorporation of the methylmalonyl units results in formation of two branched methyl groups in the elongated product. The protein is Phenolphthiocerol/phthiocerol polyketide synthase subunit E (ppsE) of Mycobacterium bovis (strain ATCC BAA-935 / AF2122/97).